The following is a 205-amino-acid chain: Probable nicotinate-nucleotide adenylyltransferase (205 aa).

Belongs to the NadD family.

The enzyme catalyses nicotinate beta-D-ribonucleotide + ATP + H(+) = deamido-NAD(+) + diphosphate. It participates in cofactor biosynthesis; NAD(+) biosynthesis; deamido-NAD(+) from nicotinate D-ribonucleotide: step 1/1. Its function is as follows. Catalyzes the reversible adenylation of nicotinate mononucleotide (NaMN) to nicotinic acid adenine dinucleotide (NaAD). This Nocardioides sp. (strain ATCC BAA-499 / JS614) protein is Probable nicotinate-nucleotide adenylyltransferase.